The following is a 132-amino-acid chain: MALTLDIVTPEKRVLSVQVDEVRAPGVQGGFGVRLNHEPFMTALEPGRLTYVEGGREHHYAVGGGFLQVADNRVIVLADTAEAAGEIDVDRARKAFEDAQNRLLQLTEQDESHQAESARVRRAAARLTVAGR.

The protein belongs to the ATPase epsilon chain family. F-type ATPases have 2 components, CF(1) - the catalytic core - and CF(0) - the membrane proton channel. CF(1) has five subunits: alpha(3), beta(3), gamma(1), delta(1), epsilon(1). CF(0) has three main subunits: a, b and c.

Its subcellular location is the cell inner membrane. In terms of biological role, produces ATP from ADP in the presence of a proton gradient across the membrane. This Anaeromyxobacter sp. (strain K) protein is ATP synthase epsilon chain.